A 447-amino-acid chain; its full sequence is Argininosuccinate synthase (447 aa).

ATP is bound by residues 17 to 25 (AFSGGLDTS) and A43. Position 99 (Y99) interacts with L-citrulline. Residues G129 and T131 each contribute to the ATP site. T131, N135, and D136 together coordinate L-aspartate. Position 135 (N135) interacts with L-citrulline. Residue D136 coordinates ATP. Residues R139 and S192 each coordinate L-citrulline. D194 serves as a coordination point for ATP. L-citrulline-binding residues include T201, E203, and E280.

The protein belongs to the argininosuccinate synthase family. Type 2 subfamily. In terms of assembly, homotetramer.

It localises to the cytoplasm. It carries out the reaction L-citrulline + L-aspartate + ATP = 2-(N(omega)-L-arginino)succinate + AMP + diphosphate + H(+). It participates in amino-acid biosynthesis; L-arginine biosynthesis; L-arginine from L-ornithine and carbamoyl phosphate: step 2/3. In Escherichia coli O8 (strain IAI1), this protein is Argininosuccinate synthase.